The sequence spans 155 residues: Ribosomal RNA large subunit methyltransferase H (155 aa).

Residues Leu72, Gly104, and 123–128 (LAKITL) each bind S-adenosyl-L-methionine.

Belongs to the RNA methyltransferase RlmH family. As to quaternary structure, homodimer.

Its subcellular location is the cytoplasm. The enzyme catalyses pseudouridine(1915) in 23S rRNA + S-adenosyl-L-methionine = N(3)-methylpseudouridine(1915) in 23S rRNA + S-adenosyl-L-homocysteine + H(+). Its function is as follows. Specifically methylates the pseudouridine at position 1915 (m3Psi1915) in 23S rRNA. The sequence is that of Ribosomal RNA large subunit methyltransferase H from Mycoplasma capricolum subsp. capricolum (strain California kid / ATCC 27343 / NCTC 10154).